Here is a 436-residue protein sequence, read N- to C-terminus: UPF0597 protein YhaM (436 aa).

This sequence belongs to the UPF0597 family.

This Salmonella paratyphi A (strain ATCC 9150 / SARB42) protein is UPF0597 protein YhaM.